A 228-amino-acid chain; its full sequence is Large ribosomal subunit protein uL3 (228 aa).

The tract at residues 157–176 (CHRHAGGTGMSASPSRTFKG) is disordered.

The protein belongs to the universal ribosomal protein uL3 family. As to quaternary structure, part of the 50S ribosomal subunit. Forms a cluster with proteins L14 and L19.

Its function is as follows. One of the primary rRNA binding proteins, it binds directly near the 3'-end of the 23S rRNA, where it nucleates assembly of the 50S subunit. In Rhodopirellula baltica (strain DSM 10527 / NCIMB 13988 / SH1), this protein is Large ribosomal subunit protein uL3.